A 527-amino-acid chain; its full sequence is Bifunctional purine biosynthesis protein PurH (527 aa).

Residues 9–156 form the MGS-like domain; it reads NAKRPIRRAL…KNHPSVAVVV (148 aa).

Belongs to the PurH family.

It catalyses the reaction (6R)-10-formyltetrahydrofolate + 5-amino-1-(5-phospho-beta-D-ribosyl)imidazole-4-carboxamide = 5-formamido-1-(5-phospho-D-ribosyl)imidazole-4-carboxamide + (6S)-5,6,7,8-tetrahydrofolate. The catalysed reaction is IMP + H2O = 5-formamido-1-(5-phospho-D-ribosyl)imidazole-4-carboxamide. It functions in the pathway purine metabolism; IMP biosynthesis via de novo pathway; 5-formamido-1-(5-phospho-D-ribosyl)imidazole-4-carboxamide from 5-amino-1-(5-phospho-D-ribosyl)imidazole-4-carboxamide (10-formyl THF route): step 1/1. The protein operates within purine metabolism; IMP biosynthesis via de novo pathway; IMP from 5-formamido-1-(5-phospho-D-ribosyl)imidazole-4-carboxamide: step 1/1. The polypeptide is Bifunctional purine biosynthesis protein PurH (Mycolicibacterium paratuberculosis (strain ATCC BAA-968 / K-10) (Mycobacterium paratuberculosis)).